We begin with the raw amino-acid sequence, 158 residues long: Developmental pluripotency-associated protein 3 (158 aa).

Disordered regions lie at residues 1 to 38 (MDEP…EILQ) and 54 to 78 (SAKP…VENR). The segment covering 26–35 (DEGDSPDDSE) has biased composition (acidic residues). The span at 58–68 (TKYHRRQRVRL) shows a compositional bias: basic residues.

It is found in the nucleus. It localises to the cytoplasm. Its function is as follows. Primordial germ cell (PGCs)-specific protein involved in epigenetic chromatin reprogramming in the zygote following fertilization. In zygotes, DNA demethylation occurs selectively in the paternal pronucleus before the first cell division, while the adjacent maternal pronucleus and certain paternally-imprinted loci are protected from this process. Participates in protection of DNA methylation in the maternal pronucleus by preventing conversion of 5mC to 5hmC: specifically recognizes and binds histone H3 dimethylated at 'Lys-9' (H3K9me2) on maternal genome, and protects maternal genome from TET3-mediated conversion to 5hmC and subsequent DNA demethylation. Does not bind paternal chromatin, which is mainly packed into protamine and does not contain much H3K9me2 mark. Also protects imprinted loci that are marked with H3K9me2 in mature sperm from DNA demethylation in early embryogenesis. May be important for the totipotent/pluripotent states continuing through preimplantation development. Also involved in chromatin condensation in oocytogenesis. The sequence is that of Developmental pluripotency-associated protein 3 (Dppa3) from Rattus norvegicus (Rat).